Reading from the N-terminus, the 1169-residue chain is MTISDKIRVYELSRDLKLENKDILDAAQKLSISVKSHSSSISLEDAKKIKNLINKNSSKKILSVSKSAIKAKNENPKNNDNKNNKNFSNPSHPEKLSKEGLNKKPLLIKPTNKVVNSLVSSNIKNPNPPTIVSNLKSQALSKNQNKTNTSVITTPNLKDKKNPSALQDKKPLKNSSGSPAKTTARPPIQLIEKPKNLANSNRNINANKINNSVNQKAQSLNRADNNKLSRADNNNFPKKNLNSPNVKSTPELVGAPIRREDPKINTNRPNSNSRQPSSNTQISANRPGGQNRQGVPNREGGPYRQGSPNRPGTPYRQGAPNRPGGQNRQGVPNREGGGPYRQGSPNRPGTPNRPGTPYRQGAPNRPGGQNRQGVPNREGGGPYRQGSPNRPGTPYRQGASGIRKPVAPNELMQLQKTNASNKEKPNISNVNKQKIEGANQKTKAPNSRLNTSPSPTAKKPARSFASNTKKPGRTDWDDSAKLEALRNKNPQKQRQKVHIIGENDDSLTSETSGYSGEKVSILSASLARPKKEKSEEIKSQKPSKQFKKKKKETTRQRQKRRAMELRAAKDAKQVRPEMIIIPEDNLTVQELADKLSLESSEIIKSLFFKGITATVTQSLDLATIETVAEEFGVPVLQDDVQEAAKKTVDMIETDDIESLIKRPPVITVMGHVDHGKTSLLDSIRESRVASGEAGGITQHIGAYQVEFEHESKKKKLTFLDTPGHEAFTAMRARGTKVTDVAVLVVAADDGCRPQTLEAISHARAAKVPIVVAINKIDKEGASPDRVKQELSEKDLIAEDWGGDVVMVPVSAIKKQNIDKLLEMILLVSEVEDLQANPERLAKGTVIEAHLDKAKGPVATLLVQNGTLKAGDVLAAGSVLGKIRAMVDEHGNRIKEAGPSCPVEALGFSEVPTAGDEFEVYRDEKSARAIVGDRATDARATKLAQQMASRRVSLSSLSTQANDGELKELNLILKADVQGSVEAILGSLEQLPKNEVQVRVLLSAPGEITETDIDLAAASGSVIIGFNTSLASGAKRAADANDVDIREYEVIYKLLEDIQSAMEGLLEPDLVEESLGQAEVRATFAVGKGAIAGCYIQSGKLQRNCSLRVLRSDKVIFEGNLDSLKRSKDDVKEVNTGFECGVGCDKFSTWSEGDIISAFKFVTKKRTLNK.

Disordered stretches follow at residues 69-108 (IKAK…PLLI) and 139-568 (ALSK…LRAA). Basic and acidic residues-rich tracts occupy residues 71–83 (AKNE…DNKN) and 92–102 (HPEKLSKEGLN). A compositionally biased stretch (polar residues) spans 139–156 (ALSKNQNKTNTSVITTPN). The segment covering 157–171 (LKDKKNPSALQDKKP) has biased composition (basic and acidic residues). Low complexity predominate over residues 196–214 (NLANSNRNINANKINNSVN). A compositionally biased stretch (polar residues) spans 231–248 (ADNNNFPKKNLNSPNVKS). Low complexity predominate over residues 265-281 (NTNRPNSNSRQPSSNTQ). Polar residues-rich tracts occupy residues 282-294 (ISAN…NRQG), 412-432 (MQLQ…NVNK), and 439-455 (NQKT…SPSP). The span at 472-486 (GRTDWDDSAKLEALR) shows a compositional bias: basic and acidic residues. Residues 544–560 (KQFKKKKKETTRQRQKR) show a composition bias toward basic residues. The tr-type G domain maps to 661–838 (KRPPVITVMG…EVEDLQANPE (178 aa)). The interval 670–677 (GHVDHGKT) is G1. 670–677 (GHVDHGKT) serves as a coordination point for GTP. The tract at residues 695-699 (GITQH) is G2. The tract at residues 720–723 (DTPG) is G3. Residues 720–724 (DTPGH) and 774–777 (NKID) each bind GTP. Residues 774 to 777 (NKID) form a G4 region. Residues 810-812 (SAI) are G5.

This sequence belongs to the TRAFAC class translation factor GTPase superfamily. Classic translation factor GTPase family. IF-2 subfamily.

The protein localises to the cytoplasm. One of the essential components for the initiation of protein synthesis. Protects formylmethionyl-tRNA from spontaneous hydrolysis and promotes its binding to the 30S ribosomal subunits. Also involved in the hydrolysis of GTP during the formation of the 70S ribosomal complex. This is Translation initiation factor IF-2 from Prochlorococcus marinus subsp. pastoris (strain CCMP1986 / NIES-2087 / MED4).